Reading from the N-terminus, the 728-residue chain is Phomopsene synthase (728 aa).

The interval 1 to 327 (MEYRYSYVID…PRYHSDQSLD (327 aa)) is terpene cyclase. Mg(2+) is bound by residues aspartate 94 and aspartate 98. Residues aspartate 94, aspartate 98, 181–184 (RIVD), asparagine 226, 230–234 (SWEKE), and 319–320 (RY) contribute to the substrate site. A DDXXD 1 motif is present at residues 94–98 (DDLVD). An NSE/DTE motif is present at residues 226–234 (NDVQSWEKE). A prenyltransferase region spans residues 328–728 (EMMVARMKYG…FRFLLSLLKV (401 aa)). Basic and acidic residues predominate over residues 352 to 363 (ENRGTKRTHQDD). Positions 352 to 379 (ENRGTKRTHQDDTEGVQSVKRFNGASTK) are disordered. 3 repeat units span residues 381–386 (GINGTN), 387–392 (GINGLN), and 393–398 (GINGSN). The interval 381 to 398 (GINGTNGINGLNGINGSN) is 3 X 6 AA approximate tandem repeats. The isopentenyl diphosphate site is built by lysine 447, arginine 450, and histidine 479. Residues aspartate 486 and aspartate 490 each contribute to the Mg(2+) site. The DDXXD 2 motif lies at 486–490 (DDVQD). Arginine 495 serves as a coordination point for dimethylallyl diphosphate. Position 496 (arginine 496) interacts with isopentenyl diphosphate. Dimethylallyl diphosphate is bound by residues lysine 574, threonine 575, glutamine 610, asparagine 617, lysine 627, and lysine 637.

This sequence in the N-terminal section; belongs to the terpene synthase family. It in the C-terminal section; belongs to the FPP/GGPP synthase family. As to quaternary structure, hexamer. It depends on Mg(2+) as a cofactor.

The enzyme catalyses isopentenyl diphosphate + (2E,6E)-farnesyl diphosphate = (2E,6E,10E)-geranylgeranyl diphosphate + diphosphate. Its pathway is secondary metabolite biosynthesis; terpenoid biosynthesis. In terms of biological role, bifunctional terpene synthase; part of the gene cluster that mediates the biosynthesis of the diterpene methyl phomopsenonate. At first, the universal precursor of diterpene, geranylgeranyl diphosphate (GGPP) is provided and is cyclized by the unusual bifunctional terpene synthase PaPS to give phomopsene. The C-terminal prenyltransferase domain of PaPS catalyzes formation of GGPP, whereas the N-terminal terpene cyclase domain catalyzes the cyclization of GGPP to phomopsene. Since the oxidation of a methylgroup to a carboxyl group is frequently catalyzed by a cytochrome P450 monooxygenase, the C-16 methyl group would be oxidized by the cluster-specific cytochrome P450 monooxygenase ORF3. Subsequently, oxidation of the allylic position and methylation of the carboxyl group may give methyl phomopsenonate. Although further study is necessary to identify genes such as a monooxygenase and a methyltransferase, the predicted functions of genes on the cluster are correlated with the structure of methyl phomopsenonate. This chain is Phomopsene synthase, found in Phomopsis amygdali (Fusicoccum amygdali).